The chain runs to 357 residues: Histidinol-phosphate aminotransferase 1 (357 aa).

Lys-217 carries the post-translational modification N6-(pyridoxal phosphate)lysine.

Belongs to the class-II pyridoxal-phosphate-dependent aminotransferase family. Histidinol-phosphate aminotransferase subfamily. In terms of assembly, homodimer. Pyridoxal 5'-phosphate serves as cofactor.

It carries out the reaction L-histidinol phosphate + 2-oxoglutarate = 3-(imidazol-4-yl)-2-oxopropyl phosphate + L-glutamate. It functions in the pathway amino-acid biosynthesis; L-histidine biosynthesis; L-histidine from 5-phospho-alpha-D-ribose 1-diphosphate: step 7/9. This Burkholderia lata (strain ATCC 17760 / DSM 23089 / LMG 22485 / NCIMB 9086 / R18194 / 383) protein is Histidinol-phosphate aminotransferase 1.